The following is an 85-amino-acid chain: MGRLYSGNLAAFKAATNKLFQLDLAVIYDDWYDAYTRKDCIRLRIEDRSGNLIDTSTFYHHDEDVLFNMCTDWLNHMYDQLKDWK.

As to quaternary structure, interacts with host dGTPase/dgt.

Functionally, plays a role in increasing the intracellular pool of dGTP. Interacts with and inhibits host dGTPase/dgt. The complex made of the host dGTPase and gene 1.2 protein creates a GTP-binding site of high affinity. Subsequent binding of GTP to the enzyme-inhibitor complex inhibits its dissociation. The sequence is that of Inhibitor of dGTPase from Escherichia coli (Bacteriophage T7).